The chain runs to 130 residues: Small ribosomal subunit protein uS8 (130 aa).

Belongs to the universal ribosomal protein uS8 family. In terms of assembly, part of the 30S ribosomal subunit. Contacts proteins S5 and S12.

Functionally, one of the primary rRNA binding proteins, it binds directly to 16S rRNA central domain where it helps coordinate assembly of the platform of the 30S subunit. The protein is Small ribosomal subunit protein uS8 of Erwinia tasmaniensis (strain DSM 17950 / CFBP 7177 / CIP 109463 / NCPPB 4357 / Et1/99).